An 89-amino-acid chain; its full sequence is Small ribosomal subunit protein uS15 (89 aa).

Belongs to the universal ribosomal protein uS15 family. In terms of assembly, part of the 30S ribosomal subunit. Forms a bridge to the 50S subunit in the 70S ribosome, contacting the 23S rRNA.

Its function is as follows. One of the primary rRNA binding proteins, it binds directly to 16S rRNA where it helps nucleate assembly of the platform of the 30S subunit by binding and bridging several RNA helices of the 16S rRNA. Forms an intersubunit bridge (bridge B4) with the 23S rRNA of the 50S subunit in the ribosome. The polypeptide is Small ribosomal subunit protein uS15 (Roseobacter denitrificans (strain ATCC 33942 / OCh 114) (Erythrobacter sp. (strain OCh 114))).